The sequence spans 645 residues: Macrolide export ATP-binding/permease protein MacB (645 aa).

One can recognise an ABC transporter domain in the interval I6 to A244. ATP is bound at residue G42–S49. A run of 4 helical transmembrane segments spans residues A274–G294, I526–V546, A574–V594, and A596–M616.

Belongs to the ABC transporter superfamily. Macrolide exporter (TC 3.A.1.122) family. In terms of assembly, homodimer.

The protein localises to the cell inner membrane. In terms of biological role, non-canonical ABC transporter that contains transmembrane domains (TMD), which form a pore in the inner membrane, and an ATP-binding domain (NBD), which is responsible for energy generation. Confers resistance against macrolides. This is Macrolide export ATP-binding/permease protein MacB from Nitrobacter winogradskyi (strain ATCC 25391 / DSM 10237 / CIP 104748 / NCIMB 11846 / Nb-255).